The following is a 773-amino-acid chain: Beta-D-xylosidase 3 (773 aa).

Residues 1–23 (MASRNRALFSVSTLFLCFIVCIS) form the signal peptide. An N-linked (GlcNAc...) asparagine glycan is attached at asparagine 131. Aspartate 298 is a catalytic residue. N-linked (GlcNAc...) asparagine glycosylation is found at asparagine 349, asparagine 432, and asparagine 770.

This sequence belongs to the glycosyl hydrolase 3 family. In terms of tissue distribution, expressed in flowers and siliques, in the early stage of seed formation and not at seed maturation. Detected exclusively in the endosperm of very young seeds when the embryo is at the globular stage.

Its subcellular location is the secreted. It localises to the extracellular space. The protein resides in the extracellular matrix. It catalyses the reaction Hydrolysis of terminal non-reducing alpha-L-arabinofuranoside residues in alpha-L-arabinosides.. In terms of biological role, involved in the hydrolysis of arabinan. Can hydrolyze (1,3)-alpha-, (1,2)-alpha-linked side group residues and non-reducing terminal L-arabinofuranose residues of debranched (1,5)-alpha-L-arabinan backbone. Also acts as a beta-D-xylosidase, releasing D-xylose from arabinoxylan and xylan. This Arabidopsis thaliana (Mouse-ear cress) protein is Beta-D-xylosidase 3 (BXL3).